The primary structure comprises 341 residues: S-adenosylmethionine:tRNA ribosyltransferase-isomerase (341 aa).

The protein belongs to the QueA family. In terms of assembly, monomer.

The protein resides in the cytoplasm. It carries out the reaction 7-aminomethyl-7-carbaguanosine(34) in tRNA + S-adenosyl-L-methionine = epoxyqueuosine(34) in tRNA + adenine + L-methionine + 2 H(+). It functions in the pathway tRNA modification; tRNA-queuosine biosynthesis. Its function is as follows. Transfers and isomerizes the ribose moiety from AdoMet to the 7-aminomethyl group of 7-deazaguanine (preQ1-tRNA) to give epoxyqueuosine (oQ-tRNA). In Halothermothrix orenii (strain H 168 / OCM 544 / DSM 9562), this protein is S-adenosylmethionine:tRNA ribosyltransferase-isomerase.